We begin with the raw amino-acid sequence, 306 residues long: Glutaminase (306 aa).

Residues serine 64, asparagine 115, glutamate 159, asparagine 166, tyrosine 190, tyrosine 242, and valine 260 each coordinate substrate.

Belongs to the glutaminase family. As to quaternary structure, homotetramer.

The catalysed reaction is L-glutamine + H2O = L-glutamate + NH4(+). The protein is Glutaminase of Vibrio vulnificus (strain YJ016).